Reading from the N-terminus, the 282-residue chain is tRNA pseudouridine synthase B (282 aa).

Asp-39 (nucleophile) is an active-site residue.

The protein belongs to the pseudouridine synthase TruB family. Type 1 subfamily.

The enzyme catalyses uridine(55) in tRNA = pseudouridine(55) in tRNA. In terms of biological role, responsible for synthesis of pseudouridine from uracil-55 in the psi GC loop of transfer RNAs. The protein is tRNA pseudouridine synthase B of Borrelia garinii subsp. bavariensis (strain ATCC BAA-2496 / DSM 23469 / PBi) (Borreliella bavariensis).